A 448-amino-acid chain; its full sequence is N-succinylarginine dihydrolase (448 aa).

Substrate is bound by residues 19–28 (GGLSYGNVAS), Asn110, and 137–138 (HR). The active site involves Glu174. Arg214 serves as a coordination point for substrate. His250 is an active-site residue. Residues Asp252 and Asn365 each coordinate substrate. The active-site Nucleophile is the Cys371.

This sequence belongs to the succinylarginine dihydrolase family. Homodimer.

The catalysed reaction is N(2)-succinyl-L-arginine + 2 H2O + 2 H(+) = N(2)-succinyl-L-ornithine + 2 NH4(+) + CO2. It functions in the pathway amino-acid degradation; L-arginine degradation via AST pathway; L-glutamate and succinate from L-arginine: step 2/5. Catalyzes the hydrolysis of N(2)-succinylarginine into N(2)-succinylornithine, ammonia and CO(2). The chain is N-succinylarginine dihydrolase from Pseudomonas savastanoi pv. phaseolicola (strain 1448A / Race 6) (Pseudomonas syringae pv. phaseolicola (strain 1448A / Race 6)).